Consider the following 1000-residue polypeptide: Chloride channel protein D (1000 aa).

Low complexity-rich tracts occupy residues methionine 1 to asparagine 16 and asparagine 38 to valine 60. The segment at methionine 1 to glutamate 90 is disordered. Topologically, residues methionine 1–tryptophan 256 are cytoplasmic. Basic and acidic residues predominate over residues arginine 71–glutamate 80. Helical transmembrane passes span isoleucine 257–valine 277, alanine 290–leucine 310, glycine 416–leucine 436, phenylalanine 442–methionine 462, isoleucine 493–isoleucine 513, leucine 534–phenylalanine 554, leucine 678–alanine 698, methionine 710–glycine 730, valine 733–serine 753, and tyrosine 772–histidine 792. CBS domains are found at residues methionine 824–valine 881 and methionine 926–leucine 984.

This sequence belongs to the chloride channel (TC 2.A.49) family.

It is found in the membrane. Voltage-gated chloride channel. Chloride channels may have several functions including the regulation of cell volume, membrane potential stabilization and signal transduction. Required for normal aggregation. This is Chloride channel protein D (clcD) from Dictyostelium discoideum (Social amoeba).